The primary structure comprises 66 residues: Small ribosomal subunit protein eS27 (66 aa).

Cys21, Cys24, Cys40, and Cys43 together coordinate Zn(2+). A C4-type zinc finger spans residues 21 to 43 (CPVCGNEQVIFSHATFPARCLVC).

The protein belongs to the eukaryotic ribosomal protein eS27 family. In terms of assembly, part of the 30S ribosomal subunit. It depends on Zn(2+) as a cofactor.

The sequence is that of Small ribosomal subunit protein eS27 from Hyperthermus butylicus (strain DSM 5456 / JCM 9403 / PLM1-5).